We begin with the raw amino-acid sequence, 517 residues long: Crotonobetaine/carnitine--CoA ligase (517 aa).

Belongs to the ATP-dependent AMP-binding enzyme family.

The enzyme catalyses 4-(trimethylamino)butanoate + ATP + CoA = 4-(trimethylamino)butanoyl-CoA + AMP + diphosphate. It carries out the reaction crotonobetaine + ATP + CoA = crotonobetainyl-CoA + AMP + diphosphate. It catalyses the reaction (R)-carnitine + ATP + CoA = (R)-carnitinyl-CoA + AMP + diphosphate. Its pathway is amine and polyamine metabolism; carnitine metabolism. Its function is as follows. Catalyzes the transfer of CoA to carnitine, generating the initial carnitinyl-CoA needed for the CaiB reaction cycle. Also has activity toward crotonobetaine and gamma-butyrobetaine. This chain is Crotonobetaine/carnitine--CoA ligase, found in Citrobacter koseri (strain ATCC BAA-895 / CDC 4225-83 / SGSC4696).